A 122-amino-acid chain; its full sequence is Small ribosomal subunit protein uS13 (122 aa).

The interval 93-122 (RLSLPVRGQRTKTNSRTRKGKRKTVAGKKK) is disordered. The segment covering 101–122 (QRTKTNSRTRKGKRKTVAGKKK) has biased composition (basic residues).

This sequence belongs to the universal ribosomal protein uS13 family. Part of the 30S ribosomal subunit. Forms a loose heterodimer with protein S19. Forms two bridges to the 50S subunit in the 70S ribosome.

Its function is as follows. Located at the top of the head of the 30S subunit, it contacts several helices of the 16S rRNA. In the 70S ribosome it contacts the 23S rRNA (bridge B1a) and protein L5 of the 50S subunit (bridge B1b), connecting the 2 subunits; these bridges are implicated in subunit movement. Contacts the tRNAs in the A and P-sites. The protein is Small ribosomal subunit protein uS13 of Chlamydia pneumoniae (Chlamydophila pneumoniae).